The chain runs to 906 residues: Cadherin-2 (906 aa).

Positions 1–25 are cleaved as a signal peptide; that stretch reads MCRIAGAPRTLLPLLAALLQASVEA. A propeptide spanning residues 26-159 is cleaved from the precursor; it reads SGEIALCKTG…HSGALQRQKR (134 aa). 5 consecutive Cadherin domains span residues 160–267, 268–382, 383–497, 498–603, and 604–717; these read DWVI…RPEF, LHQV…PPEF, TAMT…NPYF, APNP…DNAP, and QVLP…RIVG. The Extracellular segment spans residues 160 to 724; it reads DWVIPPINLP…IVGAGLGTGA (565 aa). Glutamate 170 contributes to the Ca(2+) binding site. N-linked (GlcNAc...) asparagine glycosylation occurs at asparagine 190. Ca(2+) contacts are provided by aspartate 226, glutamate 228, aspartate 259, methionine 260, asparagine 261, aspartate 262, and asparagine 263. The N-linked (GlcNAc...) asparagine glycan is linked to asparagine 273. Residues aspartate 293, aspartate 295, and asparagine 301 each coordinate Ca(2+). The N-linked (GlcNAc...) asparagine glycan is linked to asparagine 325. Aspartate 353 provides a ligand contact to Ca(2+). N-linked (GlcNAc...) asparagine glycans are attached at residues asparagine 402, asparagine 572, asparagine 651, and asparagine 692. The chain crosses the membrane as a helical span at residues 725-745; the sequence is IIAILLCIIILLILVLMFVVW. Over 746 to 906 the chain is Cytoplasmic; the sequence is MKRRDKERQA…LADMYGGGDD (161 aa). The span at 863 to 880 shows a compositional bias: low complexity; the sequence is SGSTAGSLSSLNSSSSGG. Residues 863-883 are disordered; the sequence is SGSTAGSLSSLNSSSSGGDQD.

As to quaternary structure, homodimer (via extracellular region). Can also form heterodimers with other cadherins (via extracellular region). Dimerization occurs in trans, i.e. with a cadherin chain from another cell. Interacts with CDCP1. Interacts with PCDH8; this complex may also include TAOK2. The interaction with PCDH8 may lead to internalization through TAOK2/p38 MAPK pathway. Identified in a complex containing FGFR4, NCAM1, CDH2, PLCG1, FRS2, SRC, SHC1, GAP43 and CTTN. May interact with OBSCN (via protein kinase domain 2). Interacts with FBXO45. Post-translationally, cleaved by MMP24. Ectodomain cleavage leads to the generation of a soluble 90 kDa N-terminal soluble fragment and a 45 kDa membrane-bound C-terminal fragment 1 (CTF1), which is further cleaved by gamma-secretase into a 35 kDa. Cleavage in neural stem cells by MMP24 affects CDH2-mediated anchorage of neural stem cells to ependymocytes in the adult subependymal zone, leading to modulate neural stem cell quiescence. May be phosphorylated by OBSCN. In terms of processing, O-glycosylated on Ser and Thr residues. In terms of tissue distribution, expressed in cardiac muscle (at protein level).

The protein localises to the cell membrane. It localises to the sarcolemma. Its subcellular location is the cell junction. It is found in the adherens junction. The protein resides in the desmosome. The protein localises to the cell surface. Calcium-dependent cell adhesion protein; preferentially mediates homotypic cell-cell adhesion by dimerization with a CDH2 chain from another cell. Cadherins may thus contribute to the sorting of heterogeneous cell types. Acts as a regulator of neural stem cells quiescence by mediating anchorage of neural stem cells to ependymocytes in the adult subependymal zone: upon cleavage by MMP24, CDH2-mediated anchorage is affected, leading to modulate neural stem cell quiescence. Plays a role in cell-to-cell junction formation between pancreatic beta cells and neural crest stem (NCS) cells, promoting the formation of processes by NCS cells. Required for proper neurite branching. Required for pre- and postsynaptic organization. CDH2 may be involved in neuronal recognition mechanism. In hippocampal neurons, may regulate dendritic spine density. The sequence is that of Cadherin-2 (Cdh2) from Mus musculus (Mouse).